The following is a 107-amino-acid chain: Sperm protamine P1 (107 aa).

2 stretches are compositionally biased toward basic and acidic residues: residues 1–10 (ALRKVDRNRF) and 20–33 (REAK…EFPG). Residues 1 to 35 (ALRKVDRNRFVLDNVTPQPREAKRYKEEEEFPGHG) constitute a propeptide, removed in mature form. A disordered region spans residues 1–107 (ALRKVDRNRF…RRRRRGKKGK (107 aa)). Basic residues predominate over residues 34–107 (HGRRRRRRSK…RRRRRGKKGK (74 aa)). Serine 42 is modified (phosphoserine).

Post-translationally, a series of N-terminal cleavages yield the mature protein. Only the mature protein is phosphorylated. In terms of tissue distribution, gonads.

Its subcellular location is the nucleus. It is found in the chromosome. Its function is as follows. Protamines substitute for histones in the chromatin of sperm during the haploid phase of spermatogenesis. They compact sperm DNA into a highly condensed, stable and inactive complex. The sequence is that of Sperm protamine P1 from Bolinus brandaris (Purple dye murex).